We begin with the raw amino-acid sequence, 168 residues long: Photosystem I assembly protein Ycf3 (168 aa).

3 TPR repeats span residues 35–68 (AFTYYRDGMSAQSEGNYAEALQNYYEAMRLEIDP), 72–105 (SYILYNIGLIHTSNGEHTKALEYYFRALERNPFL), and 120–153 (GEQAIQQGDSEMAEAWFAQAAEYWKQAITLTPGN).

It belongs to the Ycf3 family. As to quaternary structure, interacts with Y3IP1.

It is found in the plastid. It localises to the chloroplast thylakoid membrane. Its function is as follows. Essential for the assembly of the photosystem I (PSI) complex. May act as a chaperone-like factor to guide the assembly of the PSI subunits. The polypeptide is Photosystem I assembly protein Ycf3 (Arabidopsis thaliana (Mouse-ear cress)).